A 1517-amino-acid chain; its full sequence is DNA-directed RNA polymerase subunit beta' (1517 aa).

Residues Cys71, Cys73, Cys86, and Cys89 each coordinate Zn(2+). Residues Asp482, Asp484, and Asp486 each coordinate Mg(2+). Residues Cys812, Cys886, Cys893, and Cys896 each coordinate Zn(2+).

Belongs to the RNA polymerase beta' chain family. As to quaternary structure, the RNAP catalytic core consists of 2 alpha, 1 beta, 1 beta' and 1 omega subunit. When a sigma factor is associated with the core the holoenzyme is formed, which can initiate transcription. Mg(2+) serves as cofactor. It depends on Zn(2+) as a cofactor.

The catalysed reaction is RNA(n) + a ribonucleoside 5'-triphosphate = RNA(n+1) + diphosphate. DNA-dependent RNA polymerase catalyzes the transcription of DNA into RNA using the four ribonucleoside triphosphates as substrates. The chain is DNA-directed RNA polymerase subunit beta' from Campylobacter jejuni subsp. jejuni serotype O:2 (strain ATCC 700819 / NCTC 11168).